The sequence spans 656 residues: MAEIIGIDLGTTNSCVAVMEGGKVRVIENAEGSRTTPSIVAYTKDGEVLVGASAKRQAVTNADRTLYAIKRLIGRRFDDNVVQKDIKMVPYKIIKADNGDAWVEVKDKEGKSQKLAPPQISAQVLIKMKKTAEDYLGHEVKDAVITVPAYFNDSQRQATKDAGKIAGLNVKRIINEPTAAALAYGMDKKKGDRKIAVYDLGGGTFDISIIEIAEVDGEHQFEVLATNGDTFLGGEDFDLRLIDYLAGEFKKDEGVDLHNDPLALQRLKEAAEKAKIELSSSQQTDVNLPYITADASGPKHLNIRLTRAKLESLVEDLVERTIEPCKVAIKDAGLKVSEIDDVILVGGQTRMPKVQEAVKNFFGKEARKDVNPDEAVAIGAAIQGAVLSGEVKDVLLLDVTPLSLGIETLGGVMTKLIEKNTTIPTKANQVFSTADDNQTAVTVHVLQGEREMASANKSLGRFDLSDIPPAPRGVPQIEVTFDIDANGILHVSAKDKATGKEQSIVIKASSGLSDEEVEKMVKDAEAHRDSDRKFHELVDARNQADAMIHAAEKSVKDLGSEVSADEKSAIEKAVNELKEAMKGNDKDAIEAKTKALTEHSSKLAERVYAKKGGAAGAPPGGEAEGEPQAQAGGKKEDVVDAEFEEVKDEKKKDEDK.

Thr204 bears the Phosphothreonine; by autocatalysis mark. The disordered stretch occupies residues 607–656 (VYAKKGGAAGAPPGGEAEGEPQAQAGGKKEDVVDAEFEEVKDEKKKDEDK). Positions 620–632 (GGEAEGEPQAQAG) are enriched in low complexity. Positions 647 to 656 (KDEKKKDEDK) are enriched in basic and acidic residues.

The protein belongs to the heat shock protein 70 family.

Its function is as follows. Acts as a chaperone. The polypeptide is Chaperone protein DnaK (Coxiella burnetii (strain CbuK_Q154) (Coxiella burnetii (strain Q154))).